Consider the following 345-residue polypeptide: MDKTKALEGALSQIERAFGKGSIMRMGQRPKVETNVISTGSIGLDIALGIGGMPRGRIVEIYGPESSGKTTLALHVLAEAQKKGGTVAFIDAEHALDPGYARKLGVNIDDLLLSQPDAGEQALEIADTLVRSGAVDVLVVDSVAALVPRAELEGDMGDSHVGLHARLMSQALRKLTGTVSRSNTLVIFLNQIRMKIGVMFGNPETTTGGNALKFYSSIRLDIRRIGSIKDKDEVVGNQTRVKVVKNKMAPPFRQVEFDIMYGEGISKMGELLDLGVKGNIVEKSGAWFSFDSQRIGQGRENAKQFLREHPEMASEIERRIRAEAGVLSDALMTDPEPDADGTPED.

63–70 lines the ATP pocket; it reads GPESSGKT. A disordered region spans residues 326-345; sequence VLSDALMTDPEPDADGTPED. Positions 335-345 are enriched in acidic residues; it reads PEPDADGTPED.

This sequence belongs to the RecA family.

Its subcellular location is the cytoplasm. Its function is as follows. Can catalyze the hydrolysis of ATP in the presence of single-stranded DNA, the ATP-dependent uptake of single-stranded DNA by duplex DNA, and the ATP-dependent hybridization of homologous single-stranded DNAs. It interacts with LexA causing its activation and leading to its autocatalytic cleavage. The protein is Protein RecA of Gluconobacter oxydans (strain 621H) (Gluconobacter suboxydans).